Consider the following 67-residue polypeptide: DNA-directed RNA polymerase subunit Rpo10 (67 aa).

Zn(2+) contacts are provided by Cys7, Cys10, Cys44, and Cys45.

Belongs to the archaeal Rpo10/eukaryotic RPB10 RNA polymerase subunit family. Part of the RNA polymerase complex. Requires Zn(2+) as cofactor.

The protein resides in the cytoplasm. It carries out the reaction RNA(n) + a ribonucleoside 5'-triphosphate = RNA(n+1) + diphosphate. Functionally, DNA-dependent RNA polymerase (RNAP) catalyzes the transcription of DNA into RNA using the four ribonucleoside triphosphates as substrates. The protein is DNA-directed RNA polymerase subunit Rpo10 of Caldivirga maquilingensis (strain ATCC 700844 / DSM 13496 / JCM 10307 / IC-167).